Consider the following 192-residue polypeptide: Acetolactate synthase small subunit (192 aa).

An ACT domain is found at 29 to 103 (IITVKVRNEM…DTLKVSDLTD (75 aa)).

It belongs to the acetolactate synthase small subunit family. In terms of assembly, dimer of large and small chains.

The enzyme catalyses 2 pyruvate + H(+) = (2S)-2-acetolactate + CO2. The protein operates within amino-acid biosynthesis; L-isoleucine biosynthesis; L-isoleucine from 2-oxobutanoate: step 1/4. Its pathway is amino-acid biosynthesis; L-valine biosynthesis; L-valine from pyruvate: step 1/4. The protein is Acetolactate synthase small subunit (ilvH) of Aquifex aeolicus (strain VF5).